Here is an 811-residue protein sequence, read N- to C-terminus: Phenylalanine--tRNA ligase beta subunit (811 aa).

Positions 40–156 (AEKNENIVVG…EDIEVGSKVD (117 aa)) constitute a tRNA-binding domain. A B5 domain is found at 411–486 (KSTKEVKVPL…RIHGYDHLPY (76 aa)). Asp464, Asp470, Glu473, and Glu474 together coordinate Mg(2+). The 94-residue stretch at 717–810 (PRYPSVSRDI…VNKKFGSYVR (94 aa)) folds into the FDX-ACB domain.

The protein belongs to the phenylalanyl-tRNA synthetase beta subunit family. Type 1 subfamily. As to quaternary structure, tetramer of two alpha and two beta subunits. It depends on Mg(2+) as a cofactor.

Its subcellular location is the cytoplasm. It carries out the reaction tRNA(Phe) + L-phenylalanine + ATP = L-phenylalanyl-tRNA(Phe) + AMP + diphosphate + H(+). This Oceanobacillus iheyensis (strain DSM 14371 / CIP 107618 / JCM 11309 / KCTC 3954 / HTE831) protein is Phenylalanine--tRNA ligase beta subunit.